The chain runs to 541 residues: Chaperonin GroEL 2 (541 aa).

ATP contacts are provided by residues 29-32, 86-90, Gly413, 476-478, and Asp492; these read TLGP, DGTTT, and NAA.

Belongs to the chaperonin (HSP60) family. As to quaternary structure, forms a cylinder of 14 subunits composed of two heptameric rings stacked back-to-back. Interacts with the co-chaperonin GroES.

It is found in the secreted. It localises to the capsule. The protein localises to the cell surface. The protein resides in the cell wall. It catalyses the reaction ATP + H2O + a folded polypeptide = ADP + phosphate + an unfolded polypeptide.. In terms of biological role, together with its co-chaperonin GroES, plays an essential role in assisting protein folding. The GroEL-GroES system forms a nano-cage that allows encapsulation of the non-native substrate proteins and provides a physical environment optimized to promote and accelerate protein folding. This chain is Chaperonin GroEL 2, found in Mycolicibacterium paratuberculosis (strain ATCC BAA-968 / K-10) (Mycobacterium paratuberculosis).